Consider the following 760-residue polypeptide: Xaa-Pro dipeptidyl-peptidase (760 aa).

Catalysis depends on charge relay system residues S349, D469, and H499.

Belongs to the peptidase S15 family. As to quaternary structure, homodimer.

The protein localises to the cytoplasm. It catalyses the reaction Hydrolyzes Xaa-Pro-|- bonds to release unblocked, N-terminal dipeptides from substrates including Ala-Pro-|-p-nitroanilide and (sequentially) Tyr-Pro-|-Phe-Pro-|-Gly-Pro-|-Ile.. Functionally, removes N-terminal dipeptides sequentially from polypeptides having unsubstituted N-termini provided that the penultimate residue is proline. The polypeptide is Xaa-Pro dipeptidyl-peptidase (Streptococcus pyogenes serotype M1).